The primary structure comprises 595 residues: Elongation factor 4 (595 aa).

The 182-residue stretch at 2–183 folds into the tr-type G domain; it reads KNIRNFCIIA…TIVEKVPAPK (182 aa). Residues 14–19 and 130–133 contribute to the GTP site; these read DHGKST and NKID.

The protein belongs to the TRAFAC class translation factor GTPase superfamily. Classic translation factor GTPase family. LepA subfamily.

It is found in the cell inner membrane. The enzyme catalyses GTP + H2O = GDP + phosphate + H(+). Required for accurate and efficient protein synthesis under certain stress conditions. May act as a fidelity factor of the translation reaction, by catalyzing a one-codon backward translocation of tRNAs on improperly translocated ribosomes. Back-translocation proceeds from a post-translocation (POST) complex to a pre-translocation (PRE) complex, thus giving elongation factor G a second chance to translocate the tRNAs correctly. Binds to ribosomes in a GTP-dependent manner. The chain is Elongation factor 4 from Parabacteroides distasonis (strain ATCC 8503 / DSM 20701 / CIP 104284 / JCM 5825 / NCTC 11152).